A 516-amino-acid chain; its full sequence is 2,3-bisphosphoglycerate-independent phosphoglycerate mutase (516 aa).

The Mn(2+) site is built by Asp14 and Ser64. Ser64 serves as the catalytic Phosphoserine intermediate. Substrate is bound by residues His125, Arg155–Asp156, Arg187, Arg193, Arg263–Arg266, and Lys337. Mn(2+)-binding residues include Asp404, His408, Asp445, His446, and His464.

It belongs to the BPG-independent phosphoglycerate mutase family. Monomer. The cofactor is Mn(2+).

It catalyses the reaction (2R)-2-phosphoglycerate = (2R)-3-phosphoglycerate. It functions in the pathway carbohydrate degradation; glycolysis; pyruvate from D-glyceraldehyde 3-phosphate: step 3/5. Its function is as follows. Catalyzes the interconversion of 2-phosphoglycerate and 3-phosphoglycerate. This is 2,3-bisphosphoglycerate-independent phosphoglycerate mutase from Saccharophagus degradans (strain 2-40 / ATCC 43961 / DSM 17024).